The following is a 268-amino-acid chain: Malonyl-[acyl-carrier protein] O-methyltransferase 1 (268 aa).

It belongs to the methyltransferase superfamily.

It carries out the reaction malonyl-[ACP] + S-adenosyl-L-methionine = malonyl-[ACP] methyl ester + S-adenosyl-L-homocysteine. The protein operates within cofactor biosynthesis; biotin biosynthesis. Its function is as follows. Converts the free carboxyl group of a malonyl-thioester to its methyl ester by transfer of a methyl group from S-adenosyl-L-methionine (SAM). It allows to synthesize pimeloyl-ACP via the fatty acid synthetic pathway. The sequence is that of Malonyl-[acyl-carrier protein] O-methyltransferase 1 from Ilyobacter polytropus (strain ATCC 51220 / DSM 2926 / LMG 16218 / CuHBu1).